Here is a 257-residue protein sequence, read N- to C-terminus: tRNA pseudouridine synthase A (257 aa).

The active-site Nucleophile is Asp52. Residue Tyr111 participates in substrate binding.

This sequence belongs to the tRNA pseudouridine synthase TruA family. As to quaternary structure, homodimer.

It carries out the reaction uridine(38/39/40) in tRNA = pseudouridine(38/39/40) in tRNA. In terms of biological role, formation of pseudouridine at positions 38, 39 and 40 in the anticodon stem and loop of transfer RNAs. This chain is tRNA pseudouridine synthase A, found in Cereibacter sphaeroides (strain ATCC 17025 / ATH 2.4.3) (Rhodobacter sphaeroides).